Reading from the N-terminus, the 862-residue chain is MDVYQIELEEQAQIRSKLLVETCVKHSSSEQQQLQVKQEDLIKDFTRDEEEQPSEEEAEEEDNEEDEEEEGEEEEEDEDEEALLPVVNFNANSDFNLHFFDTPEDSSTQGAYSEANSLESEQEEEKQTQQHQQQKQHHRDLEDCLSAIEADPLQLLHCDDFYRTSALAESVAASLSPQQQQQRQHTHQQQQQQQQQQQHPGQQQHQLNCTLSNGGGALYTISSVHQFGPASNHNTSSSSPSSSAAHSSPDSGCSSASSSGSSRSCGSSSASSSSSAVSSTISSGRSSNNSVVNPAATSSSVAHLNKEQQQQPLPTTQLQQQQQHQQQLQHPQQQQSFGLADSSSSNGSSNNNNGVSSKSFVPCKVCGDKASGYHYGVTSCEGCKGFFRRSIQKQIEYRCLRDGKCLVIRLNRNRCQYCRFKKCLSAGMSRDSVRYGRVPKRSRELNGAAASSAAAGAPASLNVDDSTSSTLHPSHLQQQQQQHLLQQQQQQQHQPQLQQHHQLQQQPHVSGVRVKTPSTPQTPQMCSIASSPSELGGCNSANNNNNNNNNSSSGNASGGSGVSVGVVVVGGHQQLVGGSMVGMAGMGTDAHQVGMCHDGLAGTANELTVYDVIMCVSQAHRLNCSYTEELTRELMRRPVTVPQNGIASTVAESLEFQKIWLWQQFSARVTPGVQRIVEFAKRVPGFCDFTQDDQLILIKLGFFEVWLTHVARLINEATLTLDDGAYLTRQQLEILYDSDFVNALLNFANTLNAYGLSDTEIGLFSAMVLLASDRAGLSEPKVIGRARELVAEALRVQILRSRAGSPQALQLMPALEAKIPELRSLGAKHFSHLDWLRMNWTKLRLPPLFAEIFDIPKADDEL.

Disordered stretches follow at residues 28-83, 97-138, 173-210, and 230-353; these read SSEQ…EEAL, LHFF…KQHH, ASLS…LNCT, and ASNH…NNNN. The segment covering 37-46 has biased composition (basic and acidic residues); that stretch reads KQEDLIKDFT. Over residues 47-82 the composition is skewed to acidic residues; sequence RDEEEQPSEEEAEEEDNEEDEEEEGEEEEEDEDEEA. Positions 105–119 are enriched in polar residues; that stretch reads DSSTQGAYSEANSLE. Low complexity-rich tracts occupy residues 173 to 206, 230 to 291, 308 to 335, and 342 to 353; these read ASLS…QQHQ, ASNH…NNSV, QQQQ…QQQQ, and SSSSNGSSNNNN. A DNA-binding region (nuclear receptor) is located at residues 360–435; sequence FVPCKVCGDK…AGMSRDSVRY (76 aa). 2 consecutive NR C4-type zinc fingers follow at residues 363–383 and 399–418; these read CKVC…CEGC and CLRD…CQYC. A disordered region spans residues 444 to 557; the sequence is ELNGAAASSA…NNNSSSGNAS (114 aa). The span at 447–460 shows a compositional bias: low complexity; sequence GAAASSAAAGAPAS. A compositionally biased stretch (polar residues) spans 463-472; sequence VDDSTSSTLH. Over residues 475–508 the composition is skewed to low complexity; it reads HLQQQQQQHLLQQQQQQQHQPQLQQHHQLQQQPH. Residues 516-533 show a composition bias toward polar residues; that stretch reads TPSTPQTPQMCSIASSPS. The span at 539–555 shows a compositional bias: low complexity; it reads NSANNNNNNNNNSSSGN. Residues 626–855 form the NR LBD domain; sequence YTEELTRELM…PPLFAEIFDI (230 aa).

The protein belongs to the nuclear hormone receptor family. NR1 subfamily.

The protein localises to the nucleus. Its function is as follows. Induces the early late puff 78C which triggers puparium formation and development. This is Ecdysone-induced protein 78C (Eip78C) from Drosophila melanogaster (Fruit fly).